The following is a 47-amino-acid chain: Fasciclin-like arabinogalactan protein (47 aa).

Positions 1–47 (APTPATLNGLTIFAPNDEAFKATGVPDLSKLSNAPMVSLLQYHAAAR) constitute an FAS1 domain.

Belongs to the fasciclin-like AGP family.

In terms of biological role, may be a cell surface adhesion protein. The sequence is that of Fasciclin-like arabinogalactan protein from Jatropha curcas (Barbados nut).